Reading from the N-terminus, the 126-residue chain is Bactofilin BacO (126 aa).

Belongs to the bactofilin family. Interacts with BacN and probably also BacP, the 3 proteins colocalize as an extended structure. Interacts with PadC.

It localises to the cytoplasm. The protein resides in the cytoskeleton. A non-essential component of the chromosome segregation machinery. Positions the ParA-ParB-parS chromosome segregation machinery within the cell; BacP seems to be the most important bactofilin in this process. Forms a heteropolymeric, subpolar scaffold in the cell; BacP probably forms the core, BacO contributes to position and integrity while BacN does not seem to contribute to assembly. This is Bactofilin BacO from Myxococcus xanthus (strain DK1622).